The primary structure comprises 641 residues: Transcriptional activator of proteases prtT (641 aa).

Positions 52–81 (CNTCRKLKTRCDLDPRGHACRRCLSLRIDC) form a DNA-binding region, zn(2)-C6 fungal-type.

The protein belongs to the prtT family.

The protein localises to the nucleus. Functionally, transcription factor required for protein utilization and degradation. Regulates transcription of major secreted proteases including a serine alkaline protease (alp1) and a metalloprotease (NpI). The protein is Transcriptional activator of proteases prtT (prtT) of Aspergillus oryzae (strain ATCC 42149 / RIB 40) (Yellow koji mold).